We begin with the raw amino-acid sequence, 333 residues long: Fructose-1,6-bisphosphatase class 1 (333 aa).

4 residues coordinate Mg(2+): glutamate 92, aspartate 113, leucine 115, and aspartate 116. Substrate is bound by residues 116–119 (DGSS), asparagine 209, tyrosine 242, and lysine 272. Glutamate 278 is a binding site for Mg(2+).

It belongs to the FBPase class 1 family. As to quaternary structure, homotetramer. Requires Mg(2+) as cofactor.

It is found in the cytoplasm. It catalyses the reaction beta-D-fructose 1,6-bisphosphate + H2O = beta-D-fructose 6-phosphate + phosphate. It participates in carbohydrate biosynthesis; Calvin cycle. This chain is Fructose-1,6-bisphosphatase class 1, found in Pelodictyon phaeoclathratiforme (strain DSM 5477 / BU-1).